We begin with the raw amino-acid sequence, 194 residues long: MAACHWIGAKGWAPATGGNMSLREDARWCWLSESGKDKGSLTTDDFLQVEIATNLAPSGRKPSAETGLHTLIYRLFPEANCVLHVHTVNATVLSRVEKSDALHLSGYEMQKSLAGQITHLDDVPVAIFDNDQDIDALAERIARHHRQFPLRYGFLLRGHGLTCWGSDVAVARRHLEGLEFLFECEMQRRLLERA.

Zn(2+)-binding residues include His84 and His86.

The protein belongs to the aldolase class II family. MtnB subfamily. Requires Zn(2+) as cofactor.

It carries out the reaction 5-(methylsulfanyl)-D-ribulose 1-phosphate = 5-methylsulfanyl-2,3-dioxopentyl phosphate + H2O. It functions in the pathway amino-acid biosynthesis; L-methionine biosynthesis via salvage pathway; L-methionine from S-methyl-5-thio-alpha-D-ribose 1-phosphate: step 2/6. Catalyzes the dehydration of methylthioribulose-1-phosphate (MTRu-1-P) into 2,3-diketo-5-methylthiopentyl-1-phosphate (DK-MTP-1-P). This Cronobacter sakazakii (Enterobacter sakazakii) protein is Methylthioribulose-1-phosphate dehydratase.